Here is a 103-residue protein sequence, read N- to C-terminus: Small ribosomal subunit protein uS10 (103 aa).

Belongs to the universal ribosomal protein uS10 family. As to quaternary structure, part of the 30S ribosomal subunit.

Its function is as follows. Involved in the binding of tRNA to the ribosomes. In Xylella fastidiosa (strain M12), this protein is Small ribosomal subunit protein uS10.